We begin with the raw amino-acid sequence, 156 residues long: Ribosomal RNA large subunit methyltransferase H (156 aa).

S-adenosyl-L-methionine-binding positions include leucine 73, glycine 104, and 123–128 (LSSLTL).

The protein belongs to the RNA methyltransferase RlmH family. Homodimer.

The protein localises to the cytoplasm. It catalyses the reaction pseudouridine(1915) in 23S rRNA + S-adenosyl-L-methionine = N(3)-methylpseudouridine(1915) in 23S rRNA + S-adenosyl-L-homocysteine + H(+). Functionally, specifically methylates the pseudouridine at position 1915 (m3Psi1915) in 23S rRNA. This chain is Ribosomal RNA large subunit methyltransferase H, found in Bordetella petrii (strain ATCC BAA-461 / DSM 12804 / CCUG 43448).